Here is a 354-residue protein sequence, read N- to C-terminus: Petrobactin import system permease protein FatC (354 aa).

9 helical membrane-spanning segments follow: residues 37–57, 77–97, 116–136, 141–161, 168–188, 214–234, 259–279, 302–322, and 329–349; these read YWIVLITLIALGLLSSYGLLV, IVAIVAMIIAAVCHSLSTVAF, LYSAIQTSTVFFFGASALINF, SFLFQVVVMVFMSLILYGWLL, LQLMLLVGIIIGTGLNSVSTF, PAYFPIVIPMIIIVAVLIFAH, VIYTLVLVAILMSISTALIGP, YIFPMAFAIGFLIMTSAYFLM, and QGVVSVIIELFGGIIFLTIVL.

The protein belongs to the binding-protein-dependent transport system permease family. FecCD subfamily. In terms of assembly, the complex is composed of two ATP-binding proteins (FatE), two transmembrane proteins (FatC and FatD) and a solute-binding protein (FpuA).

The protein localises to the cell membrane. Its function is as follows. Part of an ABC transporter complex involved in ferric-petrobactin uptake. Probably responsible for the translocation of the substrate across the membrane. The chain is Petrobactin import system permease protein FatC from Bacillus anthracis.